The chain runs to 796 residues: MNEKALRTLEYHKIIEKLSALAGSSLGREKCHQLLPLVKLEDIVQMQQETTDALTRLYAKGTLSFSGIPDIRDTLMRLEIGASLGAGELLKISSVLTATLRAKNYGYNQKNNEETEEAAQDTLTERFHLLEPLSPINNEIRRCIISEEEIADDASPGLKSVRRQIKITNDKIHESLGSILNSASTKGMLQDAIITMRNGRYCLPIKQEYKNTFQGMMHDQSSTGSTAFIEPMAIVKLNNELAELAVREQEEIEKILAELSNLVATEKYNLKYNQTTLAELDFIFARAGLSKNMKASQPHFNNRHYINIKKGRHPLIDPKKVVPIDIYFGDKFDLLVITGPNTGGKTVSLKTVGLFTLMGQAGLHIPAFDGSELSIFEEVYADIGDEQSIEQSLSTFSSHMTNTVSILEHANENSLVLFDELGAGTDPTEGAALAMAILSYLHQRKIRTMATTHYSELKIFALSTDGVSNACCEFSVETLQPTYRLLIGIPGKSNAFAISSKLGLSNYIIEKAREFIGTKDESFEDVISNLEASRIAMEKDKAEAEQYKKEVEELKRKLAEKNSKIDDAKDRILREANEKARTILQEAKDYADETIRKYNKWGAGGANNKEMENERAALREKLGDTDSSLVSKAKKNRKQHKPSDFKVGDSVHVISLNLKGSVSTLPNAKGDLYVQMGILRSLVNISDLELIDEETIVAKALTKTQSGKIRMSKSMSISPELNIIGKRVDEALPLVDKYLDDAYLAHLPQVTIIHGRGTGALKEAVHAHLKRTNYVKGYRVGGFGEGDHGVTIVEFK.

339 to 346 is a binding site for ATP; that stretch reads GPNTGGKT. The disordered stretch occupies residues 620-644; it reads EKLGDTDSSLVSKAKKNRKQHKPSD. A Smr domain is found at 721-796; it reads LNIIGKRVDE…DHGVTIVEFK (76 aa).

The protein belongs to the DNA mismatch repair MutS family. MutS2 subfamily. As to quaternary structure, homodimer. Binds to stalled ribosomes, contacting rRNA.

Endonuclease that is involved in the suppression of homologous recombination and thus may have a key role in the control of bacterial genetic diversity. In terms of biological role, acts as a ribosome collision sensor, splitting the ribosome into its 2 subunits. Detects stalled/collided 70S ribosomes which it binds and splits by an ATP-hydrolysis driven conformational change. Acts upstream of the ribosome quality control system (RQC), a ribosome-associated complex that mediates the extraction of incompletely synthesized nascent chains from stalled ribosomes and their subsequent degradation. Probably generates substrates for RQC. This Lachnoclostridium phytofermentans (strain ATCC 700394 / DSM 18823 / ISDg) (Clostridium phytofermentans) protein is Endonuclease MutS2.